Reading from the N-terminus, the 474-residue chain is Transcription termination factor Rho (474 aa).

Residues 1-60 (MTEELDNTPSPAGDIPQETLPKPLPAPEETAGEQPAAAPEENRGNAVREEEEAAPVLEQI) form a disordered region. Residues 107-182 (EVVVSGVMEQ…ASVISVEDIP (76 aa)) form the Rho RNA-BD domain. ATP-binding positions include 226–231 (GKGQRG), 238–243 (RGGKTV), and Arg-269.

It belongs to the Rho family. In terms of assembly, homohexamer. The homohexamer assembles into an open ring structure.

Facilitates transcription termination by a mechanism that involves Rho binding to the nascent RNA, activation of Rho's RNA-dependent ATPase activity, and release of the mRNA from the DNA template. This is Transcription termination factor Rho from Akkermansia muciniphila (strain ATCC BAA-835 / DSM 22959 / JCM 33894 / BCRC 81048 / CCUG 64013 / CIP 107961 / Muc).